Consider the following 508-residue polypeptide: Probable cytosol aminopeptidase (508 aa).

Residues K276 and D281 each contribute to the Mn(2+) site. K288 is an active-site residue. Residues D299, D358, and E360 each contribute to the Mn(2+) site. R362 is a catalytic residue.

The protein belongs to the peptidase M17 family. The cofactor is Mn(2+).

The protein resides in the cytoplasm. It carries out the reaction Release of an N-terminal amino acid, Xaa-|-Yaa-, in which Xaa is preferably Leu, but may be other amino acids including Pro although not Arg or Lys, and Yaa may be Pro. Amino acid amides and methyl esters are also readily hydrolyzed, but rates on arylamides are exceedingly low.. The catalysed reaction is Release of an N-terminal amino acid, preferentially leucine, but not glutamic or aspartic acids.. Presumably involved in the processing and regular turnover of intracellular proteins. Catalyzes the removal of unsubstituted N-terminal amino acids from various peptides. The sequence is that of Probable cytosol aminopeptidase from Chlorobium luteolum (strain DSM 273 / BCRC 81028 / 2530) (Pelodictyon luteolum).